Consider the following 439-residue polypeptide: Damage-control phosphatase ARMT1 (439 aa).

Alanine 2 carries the N-acetylalanine modification. At serine 4 the chain carries Phosphoserine. Lysine 40 is subject to N6-acetyllysine. Residues aspartate 251 and asparagine 252 each contribute to the Mn(2+) site. 251–252 contributes to the substrate binding site; sequence DN. S-adenosyl-L-methionine is bound by residues glutamate 256 and aspartate 289. Mn(2+) is bound at residue aspartate 289. Substrate contacts are provided by residues 365–369 and lysine 402; that span reads DLNYR. The short motif at 399–402 is the Subfamily III RTxK motif element; sequence RTLK.

The protein belongs to the damage-control phosphatase family. Sugar phosphate phosphatase III subfamily. Mn(2+) is required as a cofactor. Requires Ni(2+) as cofactor. Automethylated.

It carries out the reaction beta-D-fructose 1-phosphate + H2O = D-fructose + phosphate. It catalyses the reaction beta-D-fructose 6-phosphate = dihydroxyacetone + D-glyceraldehyde 3-phosphate. The enzyme catalyses L-glutamyl-[protein] + S-adenosyl-L-methionine = [protein]-L-glutamate 5-O-methyl ester + S-adenosyl-L-homocysteine. Its function is as follows. Metal-dependent phosphatase that shows phosphatase activity against several substrates, including fructose-1-phosphate and fructose-6-phosphate. Its preference for fructose-1-phosphate, a strong glycating agent that causes DNA damage rather than a canonical yeast metabolite, suggests a damage-control function in hexose phosphate metabolism. Has also been shown to have O-methyltransferase activity that methylates glutamate residues of target proteins to form gamma-glutamyl methyl ester residues. Possibly methylates PCNA, suggesting it is involved in the DNA damage response. This Rattus norvegicus (Rat) protein is Damage-control phosphatase ARMT1.